The primary structure comprises 94 residues: MTKSDLIEQLAASRMHMPAKDVEAAIKEILEQMASTLQNGDRIEIRGFGSFSLHYRAPRVGRNPKTGDKVELTGKYVPHFKPGKELRERVNIAE.

It belongs to the bacterial histone-like protein family. As to quaternary structure, heterodimer of an alpha and a beta chain.

Its function is as follows. This protein is one of the two subunits of integration host factor, a specific DNA-binding protein that functions in genetic recombination as well as in transcriptional and translational control. In Aeromonas hydrophila subsp. hydrophila (strain ATCC 7966 / DSM 30187 / BCRC 13018 / CCUG 14551 / JCM 1027 / KCTC 2358 / NCIMB 9240 / NCTC 8049), this protein is Integration host factor subunit beta.